The following is a 94-amino-acid chain: Large ribosomal subunit protein eL42 (94 aa).

Zn(2+) is bound by residues Cys-11, Cys-14, Cys-71, and Cys-74. The C4-type zinc-finger motif lies at 11-74; the sequence is CPFCKRHTIH…LDLRFRCTVC (64 aa).

This sequence belongs to the eukaryotic ribosomal protein eL42 family. Part of the 50S ribosomal subunit. Requires Zn(2+) as cofactor.

In terms of biological role, binds to the 23S rRNA. This Pyrococcus abyssi (strain GE5 / Orsay) protein is Large ribosomal subunit protein eL42.